The chain runs to 284 residues: Pantothenate synthetase (284 aa).

30–37 (MGNLHDGH) provides a ligand contact to ATP. The active-site Proton donor is the H37. Q61 is a (R)-pantoate binding site. Residue Q61 participates in beta-alanine binding. 149–152 (GEKD) contributes to the ATP binding site. Q155 lines the (R)-pantoate pocket. ATP is bound by residues V178 and 186 to 189 (LSSR).

This sequence belongs to the pantothenate synthetase family. In terms of assembly, homodimer.

The protein localises to the cytoplasm. The catalysed reaction is (R)-pantoate + beta-alanine + ATP = (R)-pantothenate + AMP + diphosphate + H(+). Its pathway is cofactor biosynthesis; (R)-pantothenate biosynthesis; (R)-pantothenate from (R)-pantoate and beta-alanine: step 1/1. In terms of biological role, catalyzes the condensation of pantoate with beta-alanine in an ATP-dependent reaction via a pantoyl-adenylate intermediate. The polypeptide is Pantothenate synthetase (Erwinia tasmaniensis (strain DSM 17950 / CFBP 7177 / CIP 109463 / NCPPB 4357 / Et1/99)).